A 378-amino-acid polypeptide reads, in one-letter code: L-lactate dehydrogenase (378 aa).

The FMN hydroxy acid dehydrogenase domain maps to 1–378; the sequence is MIISASTDYR…ELSRDSLVKR (378 aa). Position 24 (Y24) interacts with substrate. FMN is bound by residues S106 and Q127. Residue Y129 participates in substrate binding. T155 is a binding site for FMN. Substrate is bound at residue R164. K251 serves as a coordination point for FMN. H275 acts as the Proton acceptor in catalysis. R278 provides a ligand contact to substrate. 306–330 is an FMN binding site; that stretch reads DSGIRTGLDVVRMLALGADCTMLGR.

The protein belongs to the FMN-dependent alpha-hydroxy acid dehydrogenase family. Requires FMN as cofactor.

It localises to the cell inner membrane. The catalysed reaction is (S)-lactate + A = pyruvate + AH2. In terms of biological role, catalyzes the conversion of L-lactate to pyruvate. Is coupled to the respiratory chain. The protein is L-lactate dehydrogenase of Vibrio cholerae serotype O1 (strain ATCC 39315 / El Tor Inaba N16961).